A 232-amino-acid chain; its full sequence is Cytidylate kinase (232 aa).

11–19 (GPAGAGKST) is a binding site for ATP.

It belongs to the cytidylate kinase family. Type 1 subfamily.

It is found in the cytoplasm. The catalysed reaction is CMP + ATP = CDP + ADP. It catalyses the reaction dCMP + ATP = dCDP + ADP. In Desulfitobacterium hafniense (strain Y51), this protein is Cytidylate kinase.